Here is a 449-residue protein sequence, read N- to C-terminus: Elongation factor 1-alpha C (449 aa).

In terms of domain architecture, tr-type G spans 5–234 (KQHVSIVVIG…DACDPPKRPV (230 aa)). Residues 14-21 (GHVDSGKS) are G1. 14-21 (GHVDSGKS) is a GTP binding site. K55 carries the N6,N6-dimethyllysine modification. A G2 region spans residues 70 to 74 (GITID). An N6,N6,N6-trimethyllysine modification is found at K79. The G3 stretch occupies residues 91-94 (DAPG). GTP contacts are provided by residues 91-95 (DAPGH) and 153-156 (NKMD). Residues 153–156 (NKMD) are G4. At K187 the chain carries N6,N6,N6-trimethyllysine. Residues 194-196 (SGW) form a G5 region. K265 carries the post-translational modification N6-methyllysine. An N6,N6,N6-trimethyllysine mark is found at K310 and K400.

The protein belongs to the TRAFAC class translation factor GTPase superfamily. Classic translation factor GTPase family. EF-Tu/EF-1A subfamily.

The protein localises to the cytoplasm. This protein promotes the GTP-dependent binding of aminoacyl-tRNA to the A-site of ribosomes during protein biosynthesis. In Porphyra purpurea (Red seaweed), this protein is Elongation factor 1-alpha C (TEF-C).